The following is a 307-amino-acid chain: MSETTYTTTEDTDDTNSTDSMVGTTTGETDEYVREEWREYSFDVPTKLGVDDLDVYYGDDQALEGVSMEIPEKSVTALIGPSGCGKSTFLRCLNRMNDRVSSARIDGSVTLDSQEIYQDGVNLVELRKRVGMVFQSPNPFPKSIRENIAYGPEKHGDIDTGVLARLLGRSDEEQREELVERCLRDAALWDEVHDRLDDNALGLSGGQQQRLCIARCLSVDPEVILMDEPASALDPIATAKIEDLIAELSKEYTVVIVTHNMQQAARISEQTAVFLTGGELVEYGDTDQVFENPQSERVEDYITGKFG.

The interval 1–30 (MSETTYTTTEDTDDTNSTDSMVGTTTGETD) is disordered. One can recognise an ABC transporter domain in the interval 48 to 302 (LGVDDLDVYY…PQSERVEDYI (255 aa)). An ATP-binding site is contributed by 80-87 (GPSGCGKS).

This sequence belongs to the ABC transporter superfamily. Phosphate importer (TC 3.A.1.7) family. As to quaternary structure, the complex is composed of two ATP-binding proteins (PstB), two transmembrane proteins (PstC and PstA) and a solute-binding protein (PstS).

The protein localises to the cell membrane. The catalysed reaction is phosphate(out) + ATP + H2O = ADP + 2 phosphate(in) + H(+). Part of the ABC transporter complex PstSACB involved in phosphate import. Responsible for energy coupling to the transport system. This Haloquadratum walsbyi (strain DSM 16790 / HBSQ001) protein is Phosphate import ATP-binding protein PstB.